We begin with the raw amino-acid sequence, 182 residues long: Ribosome maturation factor RimM (182 aa).

The region spanning 102-182 is the PRC barrel domain; the sequence is EEDDYYWKDL…RVEVDWDPGF (81 aa).

Belongs to the RimM family. In terms of assembly, binds ribosomal protein uS19.

Its subcellular location is the cytoplasm. In terms of biological role, an accessory protein needed during the final step in the assembly of 30S ribosomal subunit, possibly for assembly of the head region. Essential for efficient processing of 16S rRNA. May be needed both before and after RbfA during the maturation of 16S rRNA. It has affinity for free ribosomal 30S subunits but not for 70S ribosomes. In Yersinia pseudotuberculosis serotype IB (strain PB1/+), this protein is Ribosome maturation factor RimM.